The sequence spans 370 residues: 4-hydroxy-3-methylbut-2-en-1-yl diphosphate synthase (flavodoxin) (370 aa).

[4Fe-4S] cluster-binding residues include Cys268, Cys271, Cys303, and Glu310.

This sequence belongs to the IspG family. The cofactor is [4Fe-4S] cluster.

It catalyses the reaction (2E)-4-hydroxy-3-methylbut-2-enyl diphosphate + oxidized [flavodoxin] + H2O + 2 H(+) = 2-C-methyl-D-erythritol 2,4-cyclic diphosphate + reduced [flavodoxin]. It functions in the pathway isoprenoid biosynthesis; isopentenyl diphosphate biosynthesis via DXP pathway; isopentenyl diphosphate from 1-deoxy-D-xylulose 5-phosphate: step 5/6. In terms of biological role, converts 2C-methyl-D-erythritol 2,4-cyclodiphosphate (ME-2,4cPP) into 1-hydroxy-2-methyl-2-(E)-butenyl 4-diphosphate. The sequence is that of 4-hydroxy-3-methylbut-2-en-1-yl diphosphate synthase (flavodoxin) from Bacillus cereus (strain B4264).